We begin with the raw amino-acid sequence, 340 residues long: Melanin-concentrating hormone receptor 2 (340 aa).

The Extracellular portion of the chain corresponds to 1 to 39; that stretch reads MNPFHASCWNTSAELLNKSWNKEFAYQTASVVDTVILPS. Asn10 and Asn17 each carry an N-linked (GlcNAc...) asparagine glycan. The helical transmembrane segment at 40–60 threads the bilayer; sequence MIGIICSTGLVGNILIVFTII. At 61–69 the chain is on the cytoplasmic side; that stretch reads RSRKKTVPD. A helical transmembrane segment spans residues 70–90; that stretch reads IYICNLAVADLVHIVGMPFLI. Residues 91 to 104 lie on the Extracellular side of the membrane; the sequence is HQWARGGEWVFGGP. A helical transmembrane segment spans residues 105-129; sequence LCTIITSLDTCNQFACSAIMTVMSV. Topologically, residues 130-154 are cytoplasmic; it reads DRYFALVQPFRLTRWRTRYKTIRIN. Residues 155 to 175 form a helical membrane-spanning segment; the sequence is LGLWAASFILALPVWVYSKVI. Residues 176–200 are Extracellular-facing; the sequence is KFKDGVESCAFDLTSPDDVLWYTLY. A helical transmembrane segment spans residues 201 to 221; sequence LTITTFFFPLPLILVCYILIL. Residues 222–252 lie on the Cytoplasmic side of the membrane; the sequence is CYTWEMYQQNKDARCCNPSVPKQRVMKLTKM. The helical transmembrane segment at 253–273 threads the bilayer; it reads VLVLVVVFILSAAPYHVIQLV. Residues 274 to 288 are Extracellular-facing; the sequence is NLQMEQPTLAFYVGY. Residues 289 to 309 form a helical membrane-spanning segment; it reads YLSICLSYASSSINPFLYILL. At 310-340 the chain is on the cytoplasmic side; that stretch reads SGNFQKRLPQIQRRATEKEINNMGNTLKSHF.

The protein belongs to the G-protein coupled receptor 1 family. As to expression, specifically expressed in the brain, with highest levels in cerebral cortex, hippocampus and amygdala. No expression detected in the cerebellum, thalamus or hypothalamus.

The protein resides in the cell membrane. Receptor for melanin-concentrating hormone, coupled to G proteins that activate phosphoinositide hydrolysis. The chain is Melanin-concentrating hormone receptor 2 (MCHR2) from Homo sapiens (Human).